The primary structure comprises 1399 residues: DNA-directed RNA polymerase subunit beta' (1399 aa).

Cys-70, Cys-72, Cys-85, and Cys-88 together coordinate Zn(2+). Residues Asp-460, Asp-462, and Asp-464 each contribute to the Mg(2+) site. The Zn(2+) site is built by Cys-814, Cys-888, Cys-895, and Cys-898.

The protein belongs to the RNA polymerase beta' chain family. The RNAP catalytic core consists of 2 alpha, 1 beta, 1 beta' and 1 omega subunit. When a sigma factor is associated with the core the holoenzyme is formed, which can initiate transcription. The cofactor is Mg(2+). It depends on Zn(2+) as a cofactor.

It carries out the reaction RNA(n) + a ribonucleoside 5'-triphosphate = RNA(n+1) + diphosphate. In terms of biological role, DNA-dependent RNA polymerase catalyzes the transcription of DNA into RNA using the four ribonucleoside triphosphates as substrates. The polypeptide is DNA-directed RNA polymerase subunit beta' (Pseudomonas syringae pv. syringae (strain B728a)).